The primary structure comprises 122 residues: Large ribosomal subunit protein uL14 (122 aa).

Belongs to the universal ribosomal protein uL14 family. As to quaternary structure, part of the 50S ribosomal subunit. Forms a cluster with proteins L3 and L19. In the 70S ribosome, L14 and L19 interact and together make contacts with the 16S rRNA in bridges B5 and B8.

Its function is as follows. Binds to 23S rRNA. Forms part of two intersubunit bridges in the 70S ribosome. In Cellvibrio japonicus (strain Ueda107) (Pseudomonas fluorescens subsp. cellulosa), this protein is Large ribosomal subunit protein uL14.